The sequence spans 387 residues: Probable serine/threonine-protein kinase PBL18 (387 aa).

Residues 1–37 are disordered; sequence MGNCLDSSARVGNRESTFGGSSRISRKPNQSSRLSSL. Gly-2 is lipidated: N-myristoyl glycine. Cys-4 is lipidated: S-palmitoyl cysteine. A compositionally biased stretch (polar residues) spans 14–37; it reads RESTFGGSSRISRKPNQSSRLSSL. The residue at position 73 (Thr-73) is a Phosphothreonine. A Protein kinase domain is found at 84-365; the sequence is FKPNSMIGEG…ADVLSTLQQL (282 aa). ATP is bound by residues 90-98 and Lys-122; that span reads IGEGGFGCV. At Tyr-167 the chain carries Phosphotyrosine. Asp-215 functions as the Proton acceptor in the catalytic mechanism. A Phosphoserine modification is found at Ser-219. A phosphothreonine mark is found at Thr-250 and Thr-255. Tyr-263 is modified (phosphotyrosine). Residues 368-387 form a disordered region; that stretch reads SSKKMGSTQNIVMSPSSHMS.

It belongs to the protein kinase superfamily. Ser/Thr protein kinase family.

The protein localises to the cell membrane. The catalysed reaction is L-seryl-[protein] + ATP = O-phospho-L-seryl-[protein] + ADP + H(+). It carries out the reaction L-threonyl-[protein] + ATP = O-phospho-L-threonyl-[protein] + ADP + H(+). Functionally, may be involved in plant defense signaling. This Arabidopsis thaliana (Mouse-ear cress) protein is Probable serine/threonine-protein kinase PBL18.